A 665-amino-acid chain; its full sequence is Cysteine-rich receptor-like protein kinase 41 (665 aa).

The first 27 residues, 1–27 (MTSSCSLSRPQHLFFFFFLFVPFLSLG), serve as a signal peptide directing secretion. The Extracellular segment spans residues 28 to 280 (QQISVDINSA…DPKPGNDKVK (253 aa)). 2 consecutive Gnk2-homologous domains span residues 42–148 (PSNP…DKPI) and 154–260 (TSPV…SDLR). N-linked (GlcNAc...) asparagine glycosylation is found at Asn-120, Asn-165, and Asn-236. Residues 281–301 (IIIATVCSVIGFAIIAVFLYF) form a helical membrane-spanning segment. Residues 302–665 (FMTRNRRTAK…DVTITEFDAR (364 aa)) are Cytoplasmic-facing. The Protein kinase domain maps to 344-624 (FSRDNQLGEG…VVMLNANSFT (281 aa)). Residues 350 to 358 (LGEGGFGAV) and Lys-372 contribute to the ATP site. Tyr-417 is modified (phosphotyrosine). Asp-469 (proton acceptor) is an active-site residue. Ser-473 is subject to Phosphoserine. Thr-511 carries the post-translational modification Phosphothreonine. Tyr-519 is subject to Phosphotyrosine.

It belongs to the protein kinase superfamily. Ser/Thr protein kinase family. CRK subfamily.

Its subcellular location is the membrane. The catalysed reaction is L-seryl-[protein] + ATP = O-phospho-L-seryl-[protein] + ADP + H(+). It carries out the reaction L-threonyl-[protein] + ATP = O-phospho-L-threonyl-[protein] + ADP + H(+). In Arabidopsis thaliana (Mouse-ear cress), this protein is Cysteine-rich receptor-like protein kinase 41 (CRK41).